Reading from the N-terminus, the 1676-residue chain is DNA-directed RNA polymerase subunit beta'-beta'' (1676 aa).

The tract at residues 1-582 is DNA-directed RNA polymerase subunit beta'; sequence MCDAIQIRLA…FLKTTPGRII (582 aa). C64, C66, C79, and C82 together coordinate Zn(2+). Residues D454, D456, and D458 each coordinate Mg(2+). Residues 583 to 1676 form a DNA-directed RNA polymerase subunit beta'' region; sequence FYQQAAYHVG…IPAGTGAKYL (1094 aa). C804, C859, C866, and C869 together coordinate Zn(2+).

This sequence in the N-terminal section; belongs to the RNA polymerase beta' chain family. RpoC1 subfamily. The protein in the C-terminal section; belongs to the RNA polymerase beta' chain family. RpoC2 subfamily. As to quaternary structure, in plastids the minimal PEP RNA polymerase catalytic core is composed of four subunits: alpha, beta, beta', and beta''. When a (nuclear-encoded) sigma factor is associated with the core the holoenzyme is formed, which can initiate transcription. Beta' and beta'' are fused in this algae. It depends on Mg(2+) as a cofactor. Zn(2+) serves as cofactor.

It localises to the plastid. The protein resides in the chloroplast. The catalysed reaction is RNA(n) + a ribonucleoside 5'-triphosphate = RNA(n+1) + diphosphate. In terms of biological role, DNA-dependent RNA polymerase catalyzes the transcription of DNA into RNA using the four ribonucleoside triphosphates as substrates. In Cyanidioschyzon merolae (strain NIES-3377 / 10D) (Unicellular red alga), this protein is DNA-directed RNA polymerase subunit beta'-beta''.